A 163-amino-acid chain; its full sequence is Phosphopantetheine adenylyltransferase (163 aa).

Thr-11 contacts substrate. ATP contacts are provided by residues Thr-11–Phe-12 and His-19. 3 residues coordinate substrate: Lys-43, Leu-75, and Arg-89. Residues Gly-90 to Arg-92, Glu-100, and Tyr-125 to Thr-131 contribute to the ATP site.

It belongs to the bacterial CoaD family. In terms of assembly, homohexamer. It depends on Mg(2+) as a cofactor.

The protein localises to the cytoplasm. It catalyses the reaction (R)-4'-phosphopantetheine + ATP + H(+) = 3'-dephospho-CoA + diphosphate. The protein operates within cofactor biosynthesis; coenzyme A biosynthesis; CoA from (R)-pantothenate: step 4/5. Reversibly transfers an adenylyl group from ATP to 4'-phosphopantetheine, yielding dephospho-CoA (dPCoA) and pyrophosphate. In Aromatoleum aromaticum (strain DSM 19018 / LMG 30748 / EbN1) (Azoarcus sp. (strain EbN1)), this protein is Phosphopantetheine adenylyltransferase.